The sequence spans 367 residues: MSDSQTLVVKLGTSVLTGGSRRLNRAHIVELVRQCAQLHAAGHRIVIVTSGAIAAGREHLGYPELPATIASKQLLAAVGQSRLIQLWEQLFSIYGIHIGQMLLTRADMEDRERFLNARDTLRALLDNHIVPVINENDAVATAEIKVGDNDNLSALAAILAGADKLLLLTDQQGLFTADPRSNPQAELIKDVYGVDDALRSIAGDSVSGLGTGGMSTKLQAADVACRAGIDTIIASGSKPGVIGDVMEGISVGTRFHAQASPLENRKRWIFGAPPAGEITVDEGATAAMLERGSSLLPKGIKSVTGNFSRGEVIRICNLQGRDIAHGVSRYNSDALRRIAGHHSQQIDAILGYEYGPVAVHRDDMITR.

Lysine 10 is a binding site for ATP. Residues serine 50, aspartate 137, and asparagine 149 each contribute to the substrate site. Residues 169–170 (TD) and 211–217 (TGGMSTK) each bind ATP. In terms of domain architecture, PUA spans 275–353 (AGEITVDEGA…QQIDAILGYE (79 aa)).

The protein belongs to the glutamate 5-kinase family.

The protein localises to the cytoplasm. The enzyme catalyses L-glutamate + ATP = L-glutamyl 5-phosphate + ADP. It functions in the pathway amino-acid biosynthesis; L-proline biosynthesis; L-glutamate 5-semialdehyde from L-glutamate: step 1/2. In terms of biological role, catalyzes the transfer of a phosphate group to glutamate to form L-glutamate 5-phosphate. The protein is Glutamate 5-kinase of Salmonella agona (strain SL483).